A 467-amino-acid polypeptide reads, in one-letter code: Retinoic acid receptor RXR-gamma (467 aa).

The tract at residues 1 to 142 is modulating; sequence MYGNYPHFIK…TSPGSLAKHI (142 aa). NR C4-type zinc fingers lie at residues 143–163 and 179–203; these read CAICGDRSSGKHYGVYSCEGC and CRDNKDCLIDKRQRNRCQYCRYQKC. The nuclear receptor DNA-binding region spans 143 to 208; it reads CAICGDRSSG…RYQKCLAMGM (66 aa). The tract at residues 209–232 is hinge; the sequence is KREAVQEERQGSRERSENEAESTS. A compositionally biased stretch (basic and acidic residues) spans 214–226; sequence QEERQGSRERSEN. Residues 214 to 237 form a disordered region; sequence QEERQGSRERSENEAESTSGGSED. An NR LBD domain is found at 235–463; it reads SEDMPVERIL…TFLMEMLETP (229 aa).

The protein belongs to the nuclear hormone receptor family. NR2 subfamily. Homodimer. Heterodimer; with a RAR molecule. Binds DNA preferentially as a RAR/RXR heterodimer. Isoform 1 is highly expressed inliver. Isoform 2 is abundantly expressed in eye and dorsal root ganglia.

It is found in the nucleus. Functionally, receptor for retinoic acid. Retinoic acid receptors bind as heterodimers to their target response elements in response to their ligands, all-trans or 9-cis retinoic acid, and regulate gene expression in various biological processes. The RAR/RXR heterodimers bind to the retinoic acid response elements (RARE) composed of tandem 5'-AGGTCA-3' sites known as DR1-DR5. The high affinity ligand for RXRs is 9-cis retinoic acid. The protein is Retinoic acid receptor RXR-gamma (RXRG) of Gallus gallus (Chicken).